A 198-amino-acid polypeptide reads, in one-letter code: ATP-dependent Clp protease proteolytic subunit (198 aa).

Serine 98 acts as the Nucleophile in catalysis. Residue histidine 123 is part of the active site.

Belongs to the peptidase S14 family. As to quaternary structure, fourteen ClpP subunits assemble into 2 heptameric rings which stack back to back to give a disk-like structure with a central cavity, resembling the structure of eukaryotic proteasomes.

It is found in the cytoplasm. It catalyses the reaction Hydrolysis of proteins to small peptides in the presence of ATP and magnesium. alpha-casein is the usual test substrate. In the absence of ATP, only oligopeptides shorter than five residues are hydrolyzed (such as succinyl-Leu-Tyr-|-NHMec, and Leu-Tyr-Leu-|-Tyr-Trp, in which cleavage of the -Tyr-|-Leu- and -Tyr-|-Trp bonds also occurs).. Its function is as follows. Cleaves peptides in various proteins in a process that requires ATP hydrolysis. Has a chymotrypsin-like activity. Plays a major role in the degradation of misfolded proteins. The protein is ATP-dependent Clp protease proteolytic subunit of Listeria innocua serovar 6a (strain ATCC BAA-680 / CLIP 11262).